A 426-amino-acid chain; its full sequence is Probable alpha-galactosidase B (426 aa).

The first 13 residues, 1-13 (MSRSKTRQGKLPA), serve as a signal peptide directing secretion. 2 cysteine pairs are disulfide-bonded: Cys24/Cys56 and Cys106/Cys136. Asp134 acts as the Nucleophile in catalysis. N-linked (GlcNAc...) asparagine glycans are attached at residues Asn141 and Asn159. Substrate is bound at residue 204 to 208 (EWGQA). N-linked (GlcNAc...) asparagine glycosylation is present at Asn215. The active-site Proton donor is the Asp226. Asn265 is a glycosylation site (N-linked (GlcNAc...) asparagine).

Belongs to the glycosyl hydrolase 27 family.

Its subcellular location is the secreted. The enzyme catalyses Hydrolysis of terminal, non-reducing alpha-D-galactose residues in alpha-D-galactosides, including galactose oligosaccharides, galactomannans and galactolipids.. Its function is as follows. Hydrolyzes a variety of simple alpha-D-galactoside as well as more complex molecules such as oligosaccharides and polysaccharides. The sequence is that of Probable alpha-galactosidase B (aglB) from Aspergillus fumigatus (strain CBS 144.89 / FGSC A1163 / CEA10) (Neosartorya fumigata).